Reading from the N-terminus, the 207-residue chain is Gene 66 protein (207 aa).

The polypeptide is Gene 66 protein (66) (Mycobacterium (Mycobacteriophage L5)).